Here is a 333-residue protein sequence, read N- to C-terminus: MTAVAPEGRPLLRIEARNAQTPIERKPSWIRTRLRTGPQYQDVKGLVQSAGLHTVCEEAGCPNIYECWEDREATFLIGGEVCTRRCDFCQIDSGRPAPLDHDEPRRVAESVATMGLRYATVTGVARDDLADGGSWLYAETVRQIHARSADTGVEVLIPDFGGRPDQLGEVFEAAPEVLAHNLETVPRIFRRIRPAFRYERSLDVLRQARQAGLVTKSNLILGLGETAEEIHTALRDLRSAGCELLTVTQYLRPTPRHHPVERWVRPEEFLDWGRVGAELGFSGVMSGPLVRSSYRASRLYQQAMTARDQDRSEMSVPPESVSENSHGQRPSPW.

[4Fe-4S] cluster-binding residues include C56, C61, C67, C82, C86, C89, and S293. The Radical SAM core domain occupies 68–282 (WEDREATFLI…GRVGAELGFS (215 aa)). The disordered stretch occupies residues 301–333 (QQAMTARDQDRSEMSVPPESVSENSHGQRPSPW). The segment covering 314 to 325 (MSVPPESVSENS) has biased composition (low complexity).

Belongs to the radical SAM superfamily. Lipoyl synthase family. Requires [4Fe-4S] cluster as cofactor.

It localises to the cytoplasm. The catalysed reaction is [[Fe-S] cluster scaffold protein carrying a second [4Fe-4S](2+) cluster] + N(6)-octanoyl-L-lysyl-[protein] + 2 oxidized [2Fe-2S]-[ferredoxin] + 2 S-adenosyl-L-methionine + 4 H(+) = [[Fe-S] cluster scaffold protein] + N(6)-[(R)-dihydrolipoyl]-L-lysyl-[protein] + 4 Fe(3+) + 2 hydrogen sulfide + 2 5'-deoxyadenosine + 2 L-methionine + 2 reduced [2Fe-2S]-[ferredoxin]. It participates in protein modification; protein lipoylation via endogenous pathway; protein N(6)-(lipoyl)lysine from octanoyl-[acyl-carrier-protein]: step 2/2. Its function is as follows. Catalyzes the radical-mediated insertion of two sulfur atoms into the C-6 and C-8 positions of the octanoyl moiety bound to the lipoyl domains of lipoate-dependent enzymes, thereby converting the octanoylated domains into lipoylated derivatives. This is Lipoyl synthase from Frankia casuarinae (strain DSM 45818 / CECT 9043 / HFP020203 / CcI3).